We begin with the raw amino-acid sequence, 203 residues long: Proteasome subunit beta 2 (203 aa).

Positions 1–9 (MGEEVSIGA) are cleaved as a propeptide — removed in mature form; by autocatalysis. Thr-10 functions as the Nucleophile in the catalytic mechanism.

This sequence belongs to the peptidase T1B family. The 20S proteasome core is composed of 14 alpha and 14 beta subunits that assemble into four stacked heptameric rings, resulting in a barrel-shaped structure. The two inner rings, each composed of seven catalytic beta subunits, are sandwiched by two outer rings, each composed of seven alpha subunits. The catalytic chamber with the active sites is on the inside of the barrel. Has a gated structure, the ends of the cylinder being occluded by the N-termini of the alpha-subunits. Is capped at one or both ends by the proteasome regulatory ATPase, PAN.

The protein resides in the cytoplasm. The catalysed reaction is Cleavage of peptide bonds with very broad specificity.. With respect to regulation, the formation of the proteasomal ATPase PAN-20S proteasome complex, via the docking of the C-termini of PAN into the intersubunit pockets in the alpha-rings, triggers opening of the gate for substrate entry. Interconversion between the open-gate and close-gate conformations leads to a dynamic regulation of the 20S proteasome proteolysis activity. Component of the proteasome core, a large protease complex with broad specificity involved in protein degradation. The polypeptide is Proteasome subunit beta 2 (Pyrobaculum calidifontis (strain DSM 21063 / JCM 11548 / VA1)).